The sequence spans 87 residues: uncharacterized protein (87 aa).

The protein to B.subtilis XkdR.

This is an uncharacterized protein from Bacillus subtilis (strain 168).